Here is a 1166-residue protein sequence, read N- to C-terminus: Tectonin beta-propeller repeat-containing protein 1 (1166 aa).

4 TECPR repeats span residues 209 to 240, 254 to 285, 301 to 332, and 344 to 376; these read LSVW…SLVE, DLIW…SMVE, SVVW…IEMV, and DQVW…KAIV. 5 positions are modified to phosphoserine: Ser386, Ser388, Ser391, Ser413, and Ser418. The disordered stretch occupies residues 404–496; that stretch reads RGSGTESAPS…PAELPWTNID (93 aa). Polar residues predominate over residues 407 to 416; sequence GTESAPSDTD. Polar residues predominate over residues 451–462; the sequence is TSGNTDHSTENA. The span at 466–481 shows a compositional bias: basic and acidic residues; that stretch reads EGKEKAPETSRSDECR. The PH domain maps to 616 to 722; that stretch reads KTGALQWWCD…WLALLSLSCC (107 aa). The TECPR 5 repeat unit spans residues 734-761; sequence QAIWSVTCKGDIFVSEPSPDLEARERLL. Ser943 is subject to Phosphoserine. TECPR repeat units lie at residues 958-989, 1003-1034, 1049-1080, and 1092-1132; these read VALW…LHVG, YQVW…YHIP, TSVY…EHVS, and DQVW…DYGI.

The protein belongs to the TECPR1 family. In terms of assembly, interacts with ATG5; the interaction is direct. Interacts with WIPI2. Interacts with the ATG5-ATG12 conjugate, the interaction is however mutually exclusive with ATG16, since it does not interact with ATG12-ATG5-ATG16 complex.

It is found in the cytoplasmic vesicle. It localises to the autophagosome membrane. The protein resides in the lysosome membrane. Functionally, tethering factor involved in autophagy. Involved in autophagosome maturation by promoting the autophagosome fusion with lysosomes: acts by associating with both the ATG5-ATG12 conjugate and phosphatidylinositol-3-phosphate (PtdIns(3)P) present at the surface of autophagosomes. Also involved in selective autophagy against bacterial pathogens, by being required for phagophore/preautophagosomal structure biogenesis and maturation. The polypeptide is Tectonin beta-propeller repeat-containing protein 1 (Tecpr1) (Mus musculus (Mouse)).